A 160-amino-acid polypeptide reads, in one-letter code: Major strawberry allergen Fra a 1-2 (160 aa).

This sequence belongs to the BetVI family. As to quaternary structure, monomer. Interacts with AP. In terms of tissue distribution, highly expressed in ripe red fruits. Expressed in roots and white fruits. Expressed at low levels in open flowers.

Functionally, involved in the control of flavonoid biosynthesis in fruits, probably by binding directly to natural flavonoids. Binds the natural flavonoid myricetin with affinities in the low micromolar range. The protein is Major strawberry allergen Fra a 1-2 of Fragaria ananassa (Strawberry).